The primary structure comprises 423 residues: ATP-dependent RNA helicase RhlB (423 aa).

The Q motif signature appears at 9 to 37; the sequence is LRFSDLPLHHQVLAALQEKGFDYCTPIQA. A Helicase ATP-binding domain is found at 40 to 217; the sequence is LPMSLAGKDV…FEDMNDPEYV (178 aa). 53 to 60 lines the ATP pocket; the sequence is AQTGTGKT. The DEAD box motif lies at 163–166; it reads DEAD. Positions 241–388 constitute a Helicase C-terminal domain; sequence KMALLLTLLE…VSQYDVAALL (148 aa). The tract at residues 397 to 423 is disordered; that stretch reads KRGNNNSKNSANSNRTFQKKRSLKRNF. Residues 400–410 show a composition bias toward low complexity; the sequence is NNNSKNSANSN. The span at 413–423 shows a compositional bias: basic residues; that stretch reads FQKKRSLKRNF.

Belongs to the DEAD box helicase family. RhlB subfamily. As to quaternary structure, component of the RNA degradosome, which is a multiprotein complex involved in RNA processing and mRNA degradation.

It is found in the cytoplasm. It carries out the reaction ATP + H2O = ADP + phosphate + H(+). Functionally, DEAD-box RNA helicase involved in RNA degradation. Has RNA-dependent ATPase activity and unwinds double-stranded RNA. The polypeptide is ATP-dependent RNA helicase RhlB (Pasteurella multocida (strain Pm70)).